The sequence spans 172 residues: Low molecular mass early light-inducible protein HV90, chloroplastic (172 aa).

Residues 1–38 (MATMMSMSSFAGAAVVPRSSASSFGARSLPALGRRALV) constitute a chloroplast transit peptide. 2 consecutive transmembrane segments (helical) span residues 106–126 (GQAW…VPLL) and 150–170 (FAML…APFI).

Belongs to the ELIP/psbS family.

The protein resides in the plastid. It localises to the chloroplast membrane. Its function is as follows. Probably involved in the integration of pigments into the mature pigment-protein complexes. The polypeptide is Low molecular mass early light-inducible protein HV90, chloroplastic (Hordeum vulgare (Barley)).